Reading from the N-terminus, the 240-residue chain is 6-phosphogluconolactonase (240 aa).

It belongs to the glucosamine/galactosamine-6-phosphate isomerase family. 6-phosphogluconolactonase subfamily.

It carries out the reaction 6-phospho-D-glucono-1,5-lactone + H2O = 6-phospho-D-gluconate + H(+). It participates in carbohydrate degradation; pentose phosphate pathway; D-ribulose 5-phosphate from D-glucose 6-phosphate (oxidative stage): step 2/3. Functionally, hydrolysis of 6-phosphogluconolactone to 6-phosphogluconate. The protein is 6-phosphogluconolactonase (pgl) of Nostoc sp. (strain PCC 7120 / SAG 25.82 / UTEX 2576).